The sequence spans 161 residues: Ribonuclease P protein component 2 (161 aa).

Belongs to the eukaryotic/archaeal RNase P protein component 2 family. Consists of a catalytic RNA component and at least 4-5 protein subunits.

The protein localises to the cytoplasm. It catalyses the reaction Endonucleolytic cleavage of RNA, removing 5'-extranucleotides from tRNA precursor.. Its function is as follows. Part of ribonuclease P, a protein complex that generates mature tRNA molecules by cleaving their 5'-ends. This chain is Ribonuclease P protein component 2, found in Haloarcula marismortui (strain ATCC 43049 / DSM 3752 / JCM 8966 / VKM B-1809) (Halobacterium marismortui).